Here is a 133-residue protein sequence, read N- to C-terminus: Nucleoside diphosphate kinase (133 aa).

ATP contacts are provided by lysine 9, phenylalanine 57, arginine 85, threonine 91, arginine 102, and asparagine 112. The active-site Pros-phosphohistidine intermediate is the histidine 115.

This sequence belongs to the NDK family. In terms of assembly, homotetramer. Requires Mg(2+) as cofactor.

It is found in the cytoplasm. The catalysed reaction is a 2'-deoxyribonucleoside 5'-diphosphate + ATP = a 2'-deoxyribonucleoside 5'-triphosphate + ADP. It carries out the reaction a ribonucleoside 5'-diphosphate + ATP = a ribonucleoside 5'-triphosphate + ADP. In terms of biological role, major role in the synthesis of nucleoside triphosphates other than ATP. The ATP gamma phosphate is transferred to the NDP beta phosphate via a ping-pong mechanism, using a phosphorylated active-site intermediate. This is Nucleoside diphosphate kinase from Rubrobacter xylanophilus (strain DSM 9941 / JCM 11954 / NBRC 16129 / PRD-1).